The chain runs to 355 residues: UDP-N-acetylglucosamine--N-acetylmuramyl-(pentapeptide) pyrophosphoryl-undecaprenol N-acetylglucosamine transferase (355 aa).

Residues 13–15, N125, R162, S190, I244, and Q289 each bind UDP-N-acetyl-alpha-D-glucosamine; that span reads TGG.

The protein belongs to the glycosyltransferase 28 family. MurG subfamily.

The protein resides in the cell inner membrane. It carries out the reaction di-trans,octa-cis-undecaprenyl diphospho-N-acetyl-alpha-D-muramoyl-L-alanyl-D-glutamyl-meso-2,6-diaminopimeloyl-D-alanyl-D-alanine + UDP-N-acetyl-alpha-D-glucosamine = di-trans,octa-cis-undecaprenyl diphospho-[N-acetyl-alpha-D-glucosaminyl-(1-&gt;4)]-N-acetyl-alpha-D-muramoyl-L-alanyl-D-glutamyl-meso-2,6-diaminopimeloyl-D-alanyl-D-alanine + UDP + H(+). Its pathway is cell wall biogenesis; peptidoglycan biosynthesis. In terms of biological role, cell wall formation. Catalyzes the transfer of a GlcNAc subunit on undecaprenyl-pyrophosphoryl-MurNAc-pentapeptide (lipid intermediate I) to form undecaprenyl-pyrophosphoryl-MurNAc-(pentapeptide)GlcNAc (lipid intermediate II). The polypeptide is UDP-N-acetylglucosamine--N-acetylmuramyl-(pentapeptide) pyrophosphoryl-undecaprenol N-acetylglucosamine transferase (Neisseria meningitidis serogroup C (strain 053442)).